The chain runs to 435 residues: Mitochondrial distribution and morphology protein 12 (435 aa).

The 435-residue stretch at 1-435 (MSIEVDWGAA…VYPSFWTFLV (435 aa)) folds into the SMP-LTD domain. Disordered stretches follow at residues 73–113 (DEDD…AINH) and 186–268 (WNDS…TSEE). Over residues 96-113 (THPELNESSFRDDNAINH) the composition is skewed to basic and acidic residues. Positions 218–238 (SSNPTSRPSTSSTLPSHPSGS) are enriched in low complexity. Basic and acidic residues predominate over residues 251 to 268 (HGSHPEEHGHLDDPTSEE).

Belongs to the MDM12 family. Component of the ER-mitochondria encounter structure (ERMES) or MDM complex, composed of mmm1, mdm10, mdm12 and mdm34. A mmm1 homodimer associates with one molecule of mdm12 on each side in a pairwise head-to-tail manner, and the SMP-LTD domains of mmm1 and mdm12 generate a continuous hydrophobic tunnel for phospholipid trafficking.

The protein resides in the mitochondrion outer membrane. It is found in the endoplasmic reticulum membrane. In terms of biological role, component of the ERMES/MDM complex, which serves as a molecular tether to connect the endoplasmic reticulum (ER) and mitochondria. Components of this complex are involved in the control of mitochondrial shape and protein biogenesis, and function in nonvesicular lipid trafficking between the ER and mitochondria. Mdm12 is required for the interaction of the ER-resident membrane protein mmm1 and the outer mitochondrial membrane-resident beta-barrel protein mdm10. The mdm12-mmm1 subcomplex functions in the major beta-barrel assembly pathway that is responsible for biogenesis of all mitochondrial outer membrane beta-barrel proteins, and acts in a late step after the SAM complex. The mdm10-mdm12-mmm1 subcomplex further acts in the TOM40-specific pathway after the action of the mdm12-mmm1 complex. Essential for establishing and maintaining the structure of mitochondria and maintenance of mtDNA nucleoids. The protein is Mitochondrial distribution and morphology protein 12 of Aspergillus niger (strain ATCC MYA-4892 / CBS 513.88 / FGSC A1513).